Reading from the N-terminus, the 248-residue chain is 1-(5-phosphoribosyl)-5-[(5-phosphoribosylamino)methylideneamino] imidazole-4-carboxamide isomerase (248 aa).

Catalysis depends on D7, which acts as the Proton acceptor. D131 serves as the catalytic Proton donor.

The protein belongs to the HisA/HisF family.

The protein resides in the cytoplasm. It catalyses the reaction 1-(5-phospho-beta-D-ribosyl)-5-[(5-phospho-beta-D-ribosylamino)methylideneamino]imidazole-4-carboxamide = 5-[(5-phospho-1-deoxy-D-ribulos-1-ylimino)methylamino]-1-(5-phospho-beta-D-ribosyl)imidazole-4-carboxamide. The protein operates within amino-acid biosynthesis; L-histidine biosynthesis; L-histidine from 5-phospho-alpha-D-ribose 1-diphosphate: step 4/9. The protein is 1-(5-phosphoribosyl)-5-[(5-phosphoribosylamino)methylideneamino] imidazole-4-carboxamide isomerase of Baumannia cicadellinicola subsp. Homalodisca coagulata.